Here is an 81-residue protein sequence, read N- to C-terminus: ATP synthase subunit c, chloroplastic (81 aa).

The next 2 membrane-spanning stretches (helical) occupy residues 3–23 (PIICAASVIGAGLAIGLGAIG) and 57–77 (LAFMEALTIYGLVVALAIIFA).

This sequence belongs to the ATPase C chain family. As to quaternary structure, F-type ATPases have 2 components, F(1) - the catalytic core - and F(0) - the membrane proton channel. F(1) has five subunits: alpha(3), beta(3), gamma(1), delta(1), epsilon(1). F(0) has four main subunits: a(1), b(1), b'(1) and c(10-14). The alpha and beta chains form an alternating ring which encloses part of the gamma chain. F(1) is attached to F(0) by a central stalk formed by the gamma and epsilon chains, while a peripheral stalk is formed by the delta, b and b' chains.

It localises to the plastid. It is found in the chloroplast thylakoid membrane. Functionally, f(1)F(0) ATP synthase produces ATP from ADP in the presence of a proton or sodium gradient. F-type ATPases consist of two structural domains, F(1) containing the extramembraneous catalytic core and F(0) containing the membrane proton channel, linked together by a central stalk and a peripheral stalk. During catalysis, ATP synthesis in the catalytic domain of F(1) is coupled via a rotary mechanism of the central stalk subunits to proton translocation. Its function is as follows. Key component of the F(0) channel; it plays a direct role in translocation across the membrane. A homomeric c-ring of between 10-14 subunits forms the central stalk rotor element with the F(1) delta and epsilon subunits. The protein is ATP synthase subunit c, chloroplastic of Euglena gracilis.